We begin with the raw amino-acid sequence, 434 residues long: Alpha-enolase (434 aa).

Ser40 is a Mg(2+) binding site. Substrate contacts are provided by His158 and Glu167. Catalysis depends on Glu210, which acts as the Proton donor. Positions 245, 293, and 318 each coordinate Mg(2+). Residues Glu293 and Asp318 each coordinate substrate. Lys343 acts as the Proton acceptor in catalysis. Substrate is bound by residues 370–373 (SHRS) and Lys394.

This sequence belongs to the enolase family. In terms of assembly, homodimer. Requires Mg(2+) as cofactor.

Its subcellular location is the cytoplasm. The enzyme catalyses (2R)-2-phosphoglycerate = phosphoenolpyruvate + H2O. It functions in the pathway carbohydrate degradation; glycolysis; pyruvate from D-glyceraldehyde 3-phosphate: step 4/5. The polypeptide is Alpha-enolase (eno1) (Xenopus laevis (African clawed frog)).